The sequence spans 262 residues: Nodulation protein J (262 aa).

One can recognise an ABC transmembrane type-2 domain in the interval 33–259 (ASILGNLADP…FLSTALLRRR (227 aa)). Transmembrane regions (helical) follow at residues 35–55 (ILGN…GLGM), 62–82 (GVSY…MTAS), 102–122 (AILH…AWAA), 127–147 (LAGT…WVSL), 148–168 (LYAL…AMIV), 177–197 (YFIF…GAVF), and 231–251 (LVHV…PFFL).

The protein belongs to the ABC-2 integral membrane protein family. Lipooligosaccharide exporter (TC 3.A.1.102) subfamily. As to quaternary structure, the complex is composed of two ATP-binding proteins (NodI) and two transmembrane proteins (NodJ).

It is found in the cell inner membrane. In terms of biological role, part of the ABC transporter complex NodIJ involved in the export of the nodulation factors (Nod factors), the bacterial signal molecules that induce symbiosis and subsequent nodulation induction. Nod factors are LCO (lipo-chitin oligosaccharide), a modified beta-1,4-linked N-acetylglucosamine oligosaccharide. This subunit encodes the transporter. In Rhizobium meliloti (strain 1021) (Ensifer meliloti), this protein is Nodulation protein J (nodJ).